Reading from the N-terminus, the 93-residue chain is Integration host factor subunit beta (93 aa).

This sequence belongs to the bacterial histone-like protein family. Heterodimer of an alpha and a beta chain.

This protein is one of the two subunits of integration host factor, a specific DNA-binding protein that functions in genetic recombination as well as in transcriptional and translational control. The sequence is that of Integration host factor subunit beta from Idiomarina loihiensis (strain ATCC BAA-735 / DSM 15497 / L2-TR).